A 602-amino-acid chain; its full sequence is Glutamyl-tRNA(Gln) amidotransferase subunit B, mitochondrial (602 aa).

The protein belongs to the GatB/GatE family. GatB subfamily. As to quaternary structure, subunit of the heterotrimeric GatCAB amidotransferase (AdT) complex, composed of A, B and C subunits.

Its subcellular location is the mitochondrion. The enzyme catalyses L-glutamyl-tRNA(Gln) + L-glutamine + ATP + H2O = L-glutaminyl-tRNA(Gln) + L-glutamate + ADP + phosphate + H(+). Its function is as follows. Allows the formation of correctly charged Gln-tRNA(Gln) through the transamidation of misacylated Glu-tRNA(Gln) in the mitochondria. The reaction takes place in the presence of glutamine and ATP through an activated gamma-phospho-Glu-tRNA(Gln). The sequence is that of Glutamyl-tRNA(Gln) amidotransferase subunit B, mitochondrial from Paracoccidioides lutzii (strain ATCC MYA-826 / Pb01) (Paracoccidioides brasiliensis).